A 317-amino-acid chain; its full sequence is L-lactate dehydrogenase (317 aa).

NAD(+) is bound by residues 16-17, aspartate 38, lysine 43, tyrosine 69, and 83-84; these read FV and GA. Residues glutamine 86 and arginine 92 each coordinate substrate. NAD(+) is bound by residues serine 105, 122-124, and serine 147; that span reads ATN. 124 to 127 contacts substrate; sequence NPVD. 152-155 contacts substrate; sequence DTAR. Beta-D-fructose 1,6-bisphosphate contacts are provided by residues arginine 157 and 169–172; that span reads QNVH. Catalysis depends on histidine 179, which acts as the Proton acceptor. Residue tyrosine 224 is modified to Phosphotyrosine. A substrate-binding site is contributed by threonine 233.

This sequence belongs to the LDH/MDH superfamily. LDH family. In terms of assembly, exists as a dimer and a tetramer (dimer of dimers). The conversion occurs via the binding of fructose 1,6-bisphosphate (FBP) to the dimer.

Its subcellular location is the cytoplasm. It catalyses the reaction (S)-lactate + NAD(+) = pyruvate + NADH + H(+). Its pathway is fermentation; pyruvate fermentation to lactate; (S)-lactate from pyruvate: step 1/1. Its activity is regulated as follows. Allosterically activated by fructose 1,6-bisphosphate (FBP). The improvement in affinity for substrate occurs in two steps; the binding of fructose 1,6-bisphosphate (FBP) to the dimer, and the dimer to tetramer conversion. Functionally, catalyzes the conversion of lactate to pyruvate. This chain is L-lactate dehydrogenase, found in Geobacillus stearothermophilus (Bacillus stearothermophilus).